The sequence spans 447 residues: Tektin-4 (447 aa).

Coiled-coil stretches lie at residues 69 to 144 (ADRD…ALDA) and 304 to 423 (FGRR…TNSL). Basic and acidic residues predominate over residues 72 to 81 (DQSERQRHES). The tract at residues 72–104 (DQSERQRHESQQLAAETEALAQRTQQDSTRKVG) is disordered. A compositionally biased stretch (low complexity) spans 82–97 (QQLAAETEALAQRTQQ).

The protein belongs to the tektin family. As to quaternary structure, microtubule inner protein component of sperm flagellar doublet microtubules. In terms of processing, ubiquitinated, leading to its degradation. Deubiquitinated by USP16, promoting its stability. In terms of tissue distribution, expressed in trachea multiciliated cells.

Its subcellular location is the cytoplasm. The protein resides in the cytoskeleton. It localises to the cilium axoneme. The protein localises to the flagellum axoneme. Microtubule inner protein (MIP) part of the dynein-decorated doublet microtubules (DMTs) in cilia and flagellar axoneme. Forms filamentous polymers in the walls of ciliary and flagellar microtubules. Contributes to normal sperm motility. The sequence is that of Tektin-4 (TEKT4) from Bos taurus (Bovine).